The primary structure comprises 177 residues: Small ribosomal subunit protein mS23 (177 aa).

N-acetylalanine is present on alanine 2. At lysine 83 the chain carries N6-succinyllysine. Position 102 is an N6-acetyllysine (lysine 102). The tract at residues leucine 145–proline 177 is disordered.

The protein belongs to the mitochondrion-specific ribosomal protein mS23 family. As to quaternary structure, component of the mitochondrial ribosome small subunit (28S) which comprises a 12S rRNA and about 30 distinct proteins.

The protein resides in the mitochondrion. The sequence is that of Small ribosomal subunit protein mS23 from Mus musculus (Mouse).